The sequence spans 142 residues: Nucleoside diphosphate kinase (142 aa).

Residues Lys9, Phe57, Arg85, Thr91, Arg102, and Asn112 each coordinate ATP. His115 (pros-phosphohistidine intermediate) is an active-site residue.

It belongs to the NDK family. In terms of assembly, homotetramer. Mg(2+) serves as cofactor.

It localises to the cytoplasm. It catalyses the reaction a 2'-deoxyribonucleoside 5'-diphosphate + ATP = a 2'-deoxyribonucleoside 5'-triphosphate + ADP. It carries out the reaction a ribonucleoside 5'-diphosphate + ATP = a ribonucleoside 5'-triphosphate + ADP. In terms of biological role, major role in the synthesis of nucleoside triphosphates other than ATP. The ATP gamma phosphate is transferred to the NDP beta phosphate via a ping-pong mechanism, using a phosphorylated active-site intermediate. This is Nucleoside diphosphate kinase from Dehalococcoides mccartyi (strain ATCC BAA-2100 / JCM 16839 / KCTC 5957 / BAV1).